A 142-amino-acid polypeptide reads, in one-letter code: Hemoglobin subunit beta-C (142 aa).

The Globin domain occupies 1 to 142 (MPNKALITGF…VASALAHRYH (142 aa)). Positions 59 and 88 each coordinate heme b.

Belongs to the globin family. In terms of assembly, heterotetramer of two alpha chains and two beta chains. In terms of tissue distribution, red blood cells.

Functionally, involved in oxygen transport from the lung to the various peripheral tissues. The protein is Hemoglobin subunit beta-C (HBBC) of Capra hircus (Goat).